The sequence spans 372 residues: MIFPRKCQSTQRDLWNIFKLWGWTMLCCDFLAHHGTDCWTYHYSENPMNWQKARRFCRENYTDLVAIQNKAEIEYLEKTLPFSPSYYWIGIRKIGGIWTWVGTNKSLTQEAENWGDGEPNNKKNKEDCVEIYIKRKKDAGKWNDDACHKPKAALCYTASCQPWSCSGHGECVEIINNYTCNCDVGYYGPQCQFVIQCEPLEPPKLGTMDCTHPLGDFSFSSQCAFNCSEGTNLTGIEETTCGPFGNWSSPEPTCQVIQCEPLSAPDLGIMNCSHPLASFSFSSACTFSCSEGTELIGEKKTICESSGIWSNPNPICQKLDRSFSMIKEGDYNPLFIPVAVIVTAFSGLAFIIWLARRLKKGKKSKKSMDDPY.

Positions 1–28 (MIFPRKCQSTQRDLWNIFKLWGWTMLCC) are cleaved as a signal peptide. A propeptide spanning residues 29 to 38 (DFLAHHGTDC) is cleaved from the precursor. Residues 39–332 (WTYHYSENPM…FSMIKEGDYN (294 aa)) lie on the Extracellular side of the membrane. In terms of domain architecture, C-type lectin spans 55 to 155 (RFCRENYTDL…ACHKPKAALC (101 aa)). Intrachain disulfides connect Cys-57/Cys-155, Cys-128/Cys-147, Cys-128/Cys-160, Cys-160/Cys-171, Cys-165/Cys-180, Cys-182/Cys-191, Cys-197/Cys-241, Cys-227/Cys-254, Cys-259/Cys-303, and Cys-289/Cys-316. 2 N-linked (GlcNAc...) asparagine glycosylation sites follow: Asn-60 and Asn-104. 5 residues coordinate Ca(2+): Glu-118, Asn-120, Glu-126, Asn-143, and Asp-144. The EGF-like domain maps to 156 to 192 (YTASCQPWSCSGHGECVEIINNYTCNCDVGYYGPQCQ). An N-linked (GlcNAc...) asparagine glycan is attached at Asn-177. 2 Sushi domains span residues 195-256 (IQCE…TCQV) and 257-318 (IQCE…ICQK). Asn-226, Asn-232, Asn-246, and Asn-271 each carry an N-linked (GlcNAc...) asparagine glycan. A helical membrane pass occupies residues 333–355 (PLFIPVAVIVTAFSGLAFIIWLA). Residues 356 to 372 (RRLKKGKKSKKSMDDPY) lie on the Cytoplasmic side of the membrane.

It belongs to the selectin/LECAM family. In terms of assembly, interaction with SELPLG/PSGL1 and PODXL2 is required for promoting recruitment and rolling of leukocytes. This interaction is dependent on the sialyl Lewis X glycan modification of SELPLG and PODXL2, and tyrosine sulfation modifications of SELPLG. Sulfation on 'Tyr-51' of SELPLG is important for L-selectin binding. In terms of processing, N-glycosylated.

The protein resides in the cell membrane. Its function is as follows. Calcium-dependent lectin that mediates cell adhesion by binding to glycoproteins on neighboring cells. Mediates the adherence of lymphocytes to endothelial cells of high endothelial venules in peripheral lymph nodes. Promotes initial tethering and rolling of leukocytes in endothelia. The polypeptide is L-selectin (SELL) (Papio hamadryas (Hamadryas baboon)).